The sequence spans 88 residues: Small ribosomal subunit protein bS20 (88 aa).

This sequence belongs to the bacterial ribosomal protein bS20 family.

Its function is as follows. Binds directly to 16S ribosomal RNA. This is Small ribosomal subunit protein bS20 from Chelativorans sp. (strain BNC1).